The primary structure comprises 551 residues: Prunin 1 Pru du 6.0101 (551 aa).

An N-terminal signal peptide occupies residues 1 to 20 (MAKAFVFSLCLLLVFNGCLA). Intrachain disulfides connect C32–C65 and C108–C374. The Cupin type-1 1 domain maps to 37-312 (LQAREPDNRI…ALNVNEETAR (276 aa)). 3 disordered regions span residues 111–194 (TFEE…QKTR), 238–293 (NPRK…NVFS), and 311–361 (ARNL…QQQG). Composition is skewed to low complexity over residues 114-124 (ESQQSSQQGRQ), 132-148 (QQQQ…QQEQ), and 168-185 (QEQQ…QQFR). IgE-binding regions lie at residues 118–132 (SSQQ…QERQ), 145–159 (QQEQ…QQGR), 161–175 (QQEE…QGQQ), and 225–239 (LFHV…DQNP). A compositionally biased stretch (low complexity) spans 254–275 (QQGQSQPRQQGEQGRPGQHQQP). The segment at 281-295 (QQEQQGSGNNVFSGF) is igE-binding. Polar residues-rich tracts occupy residues 282 to 293 (QEQQGSGNNVFS) and 311 to 323 (ARNL…NRNQ). The segment covering 339 to 350 (GRQEREHEERQQ) has biased composition (basic and acidic residues). Over residues 351-361 (EQLQQERQQQG) the composition is skewed to low complexity. Positions 367-372 (NGLEET) match the NGXEET; peptidase recognition motif motif. One can recognise a Cupin type-1 2 domain in the interval 380–529 (ENIGNPERAD…AYQISREQAR (150 aa)). The tract at residues 510 to 524 (RALPDEVLANAYQIS) is igE-binding.

This sequence belongs to the 11S seed storage protein (globulins) family. Hexamer of two trimers; each subunit is composed of an acidic and a basic chain derived from a single precursor and linked by a disulfide bond. In terms of processing, proteolytically processed from a single precursor to produce an acidic and a basic chain that are linked by a disulfide bond. In terms of tissue distribution, expressed in seed (at protein level).

Seed storage protein. The chain is Prunin 1 Pru du 6.0101 from Prunus dulcis (Almond).